We begin with the raw amino-acid sequence, 337 residues long: Probable tyrosine--tRNA ligase, cytoplasmic (337 aa).

L-tyrosine is bound at residue Y35. A 'HIGH' region motif is present at residues 40-48 (ITGKPHIAY). L-tyrosine-binding residues include Y162, Q166, D169, and Q184. The short motif at 218–222 (KMSSS) is the 'KMSKS' region element.

Belongs to the class-I aminoacyl-tRNA synthetase family. In terms of assembly, homodimer.

It is found in the cytoplasm. It carries out the reaction tRNA(Tyr) + L-tyrosine + ATP = L-tyrosyl-tRNA(Tyr) + AMP + diphosphate + H(+). This Encephalitozoon cuniculi (strain GB-M1) (Microsporidian parasite) protein is Probable tyrosine--tRNA ligase, cytoplasmic.